The following is a 617-amino-acid chain: Probable LRR receptor-like serine/threonine-protein kinase RKF3 (617 aa).

Positions 1 to 20 (MLFLRRIAVVFFVFTSFSAA) are cleaved as a signal peptide. The Extracellular portion of the chain corresponds to 21–212 (QNSTCPLDFS…PTSSGANKVK (192 aa)). N-linked (GlcNAc...) asparagine glycans are attached at residues asparagine 22, asparagine 124, asparagine 135, and asparagine 165. Residues 213–233 (VLVSSFSVLLVASVLVITAWF) traverse the membrane as a helical segment. Residues 234–617 (WYCRRKKSKL…DGPSGNTNTT (384 aa)) lie on the Cytoplasmic side of the membrane. Residues 283–563 (FSRHNIIGRG…VKMLESNEFT (281 aa)) enclose the Protein kinase domain. ATP contacts are provided by residues 289–297 (IGRGGYGNV) and lysine 311. Aspartate 412 (proton acceptor) is an active-site residue. Residues 585 to 617 (VSSSSGSGKLTSPTGYQAFSFGGDGPSGNTNTT) are disordered.

It belongs to the protein kinase superfamily. Ser/Thr protein kinase family. As to expression, expressed in the whole plant at low levels.

The protein resides in the cell membrane. It carries out the reaction L-seryl-[protein] + ATP = O-phospho-L-seryl-[protein] + ADP + H(+). The catalysed reaction is L-threonyl-[protein] + ATP = O-phospho-L-threonyl-[protein] + ADP + H(+). In Arabidopsis thaliana (Mouse-ear cress), this protein is Probable LRR receptor-like serine/threonine-protein kinase RKF3 (RKF3).